The chain runs to 199 residues: ATP-dependent Clp protease proteolytic subunit (199 aa).

Catalysis depends on Ser98, which acts as the Nucleophile. Residue His123 is part of the active site.

The protein belongs to the peptidase S14 family. As to quaternary structure, fourteen ClpP subunits assemble into 2 heptameric rings which stack back to back to give a disk-like structure with a central cavity, resembling the structure of eukaryotic proteasomes.

It localises to the cytoplasm. The enzyme catalyses Hydrolysis of proteins to small peptides in the presence of ATP and magnesium. alpha-casein is the usual test substrate. In the absence of ATP, only oligopeptides shorter than five residues are hydrolyzed (such as succinyl-Leu-Tyr-|-NHMec, and Leu-Tyr-Leu-|-Tyr-Trp, in which cleavage of the -Tyr-|-Leu- and -Tyr-|-Trp bonds also occurs).. In terms of biological role, cleaves peptides in various proteins in a process that requires ATP hydrolysis. Has a chymotrypsin-like activity. Plays a major role in the degradation of misfolded proteins. The protein is ATP-dependent Clp protease proteolytic subunit of Ehrlichia chaffeensis (strain ATCC CRL-10679 / Arkansas).